We begin with the raw amino-acid sequence, 606 residues long: Leucine-rich repeat and immunoglobulin-like domain-containing nogo receptor-interacting protein 1 (606 aa).

The signal sequence occupies residues 1-27 (MILQLPSCLCPILLIVVGSILSGSASG). Cystine bridges form between Cys28-Cys34 and Cys32-Cys43. In terms of domain architecture, LRRNT spans 28–57 (CPQRCDCSPQDRSVLCHRKRYLDVPEGIPT). Topologically, residues 28–547 (CPQRCDCSPQ…FDIKTLIIAT (520 aa)) are extracellular. LRR repeat units lie at residues 58-79 (DTRLLDLSKNRIKALNQDEFSA), 82-103 (YLEELELNENIVSIIEPGAFNG), 106-127 (NLRSLGLRSNRLKLIPLGVFTG), 130-151 (NLTQLDISENKIVILLDDMFQD), 154-175 (NLKSLEVGDNDLVYISHRAFRG), 178-199 (SLEELTLEKCNLTSVPTEALSH), 202-223 (GLITLKLRYLNINVIRDYSFKR), 250-271 (NLTSLSITHSNLSSIPYVAIRH), 274-295 (YLRFLNLSYNPITAVEGSMLYE), 298-319 (RLQEFHLVGGQLSVVEPYAFRG), and 322-343 (HLKVLNVSSNYLSTLEESSFHS). The N-linked (GlcNAc...) asparagine glycan is linked to Asn130. A glycan (N-linked (GlcNAc...) asparagine) is linked at Asn188. Asn250, Asn260, and Asn279 each carry an N-linked (GlcNAc...) asparagine glycan. N-linked (GlcNAc...) asparagine glycans are attached at residues Asn327, Asn374, Asn478, Asn491, Asn512, Asn523, and Asn528. The LRRCT domain occupies 355-409 (NPLACDCRLLWIFRRRWRLNFSRQQPSCSSPEYVQGKEFKDFPDVLQPNYFTCRR). Intrachain disulfides connect Cys359–Cys382, Cys361–Cys407, and Cys432–Cys483. Positions 397-496 (PDVLQPNYFT…NAGGNDTSLA (100 aa)) constitute an Ig-like C2-type domain. Residues 548 to 568 (TMGFISFLGVVLFCLVLLFLW) traverse the membrane as a helical segment. The Cytoplasmic portion of the chain corresponds to 569–606 (SRGKGNTKHNIEIEYVPRKSDAGLSSADAPRKFNMKMI).

It localises to the cell membrane. Its function is as follows. May play a role in regulating axonal regeneration and plasticity in the adult central nervous system. The polypeptide is Leucine-rich repeat and immunoglobulin-like domain-containing nogo receptor-interacting protein 1 (lingo1) (Xenopus tropicalis (Western clawed frog)).